A 124-amino-acid chain; its full sequence is Large ribosomal subunit protein bL12 (124 aa).

The protein belongs to the bacterial ribosomal protein bL12 family. As to quaternary structure, homodimer. Part of the ribosomal stalk of the 50S ribosomal subunit. Forms a multimeric L10(L12)X complex, where L10 forms an elongated spine to which 2 to 4 L12 dimers bind in a sequential fashion. Binds GTP-bound translation factors.

Functionally, forms part of the ribosomal stalk which helps the ribosome interact with GTP-bound translation factors. Is thus essential for accurate translation. In Borreliella afzelii (strain PKo) (Borrelia afzelii), this protein is Large ribosomal subunit protein bL12.